The sequence spans 143 residues: Phospholipase A2 isozymes PA3A/PA3B/PA5 (143 aa).

Ca(2+) contacts are provided by Trp10, Gly12, and Gly14. Intrachain disulfides connect Cys11/Cys33, Cys32/Cys72, and Cys39/Cys65. Residue His36 is part of the active site. A Ca(2+)-binding site is contributed by Asp37.

It belongs to the phospholipase A2 family. Group III subfamily. It depends on Ca(2+) as a cofactor. Expressed by the venom gland.

The protein resides in the secreted. The enzyme catalyses a 1,2-diacyl-sn-glycero-3-phosphocholine + H2O = a 1-acyl-sn-glycero-3-phosphocholine + a fatty acid + H(+). Its function is as follows. PLA2 catalyzes the calcium-dependent hydrolysis of the 2-acyl groups in 3-sn-phosphoglycerides. This Heloderma suspectum (Gila monster) protein is Phospholipase A2 isozymes PA3A/PA3B/PA5.